The sequence spans 737 residues: Relaxin receptor 2 (737 aa).

The Extracellular portion of the chain corresponds to 1 to 399 (MFPLLHFIVL…SSFEDLLANN (399 aa)). In terms of domain architecture, LDL-receptor class A spans 27–64 (LCQKGYFPCGNLTKCLPRAFHCDGVDDCGNGADEDNCG). Intrachain disulfides connect cysteine 28-cysteine 41, cysteine 35-cysteine 54, and cysteine 48-cysteine 63. Asparagine 37 is a glycosylation site (N-linked (GlcNAc...) asparagine). Asparagine 121 carries N-linked (GlcNAc...) asparagine glycosylation. LRR repeat units lie at residues 121–142 (NTTLLSLKKNKIHSLPDKVFTK), 145–166 (QLKQIFLQHNCITHISRKAFFG), 169–190 (NLQILYLSHNCITTLRPGVFKD), 193–214 (QLTWLILDDNPITRISQQLFTG), 217–238 (SLFFLSMVNNYLEALPKQMCAQ), 241–262 (QLNWMDLEGNGIKYLTNSSFLS), 265–286 (SLTVLFLPRNQIDFVPEKTFSS), 289–310 (NLGELDLSSNMIMELPPEIFKD), 313–334 (LLQKLNLSSNPLLYLHKNQFES), and 337–358 (QLQSLDLERIEIPNINTRMFQP). An N-linked (GlcNAc...) asparagine glycan is attached at asparagine 257. Residue asparagine 318 is glycosylated (N-linked (GlcNAc...) asparagine). Residue asparagine 361 is glycosylated (N-linked (GlcNAc...) asparagine). The chain crosses the membrane as a helical span at residues 400-420 (ILRIFVWVIAFITCFGNLFVI). The Cytoplasmic segment spans residues 421–438 (GMRSFIKAENTTHATSIK). Residues 439-459 (ILCCADCLMGVYLFFIGFFDI) traverse the membrane as a helical segment. Over 460–478 (KYRGQYQKYALLWMESLQC) the chain is Extracellular. Cysteine 478 and cysteine 556 are disulfide-bonded. The helical transmembrane segment at 479 to 501 (RLMGFLAMLSTEVSVLLLTYLTL) threads the bilayer. Residues 502–520 (EKFLAIVFPFSNIRPGKWQ) lie on the Cytoplasmic side of the membrane. A helical transmembrane segment spans residues 521–541 (TMVILICIWIVGFLIAVIPFW). The Extracellular portion of the chain corresponds to 542-575 (KEDYFGNFYGKNGVCFPLYYDQTEDIGSKGYSLG). A helical transmembrane segment spans residues 576-596 (IFLGVNLLAFLIIVFSYTIMF). Residues 597–622 (CSIKKTALQTSEVRNPIGREVAVANR) lie on the Cytoplasmic side of the membrane. A helical transmembrane segment spans residues 623–643 (FFFIVFSDAICWIPVFVIKIL). Over 644–653 (SLFRVEIPGT) the chain is Extracellular. Residues 654 to 674 (ITSWIVIFFLPVNSALNPILY) traverse the membrane as a helical segment. At 675-737 (TLTTSFFKDK…LGDSIVKPIS (63 aa)) the chain is on the cytoplasmic side.

The protein belongs to the G-protein coupled receptor 1 family.

Its subcellular location is the cell membrane. Its function is as follows. Receptor for relaxin. The activity of this receptor is mediated by G proteins leading to stimulation of adenylate cyclase and an increase of cAMP. May also be a receptor for Leydig insulin-like peptide (INSL3). The polypeptide is Relaxin receptor 2 (RXFP2) (Canis lupus familiaris (Dog)).